The following is a 274-amino-acid chain: Oxidoreductase stcQ (274 aa).

Belongs to the avfA family.

Its pathway is mycotoxin biosynthesis; sterigmatocystin biosynthesis. Oxidoreductase; part of the gene cluster that mediates the biosynthesis of sterigmatocystin (ST), a polyketide-derived furanocoumarin which is part of the most toxic and carcinogenic compounds among the known mycotoxins. The first step in the biosynthesis of sterigmatocystin is the production of hexanoate by the fatty acid synthase (FAS) units stcJ and stcK. The polyketide backbone is assembled by the non-reducing polyketide synthase stcA by condensation of the starter hexanoyl-CoA and 7 malonyl-CoA extender units followed by cyclization and release of norsolorinic acid. Norsolorinic acid is the first stable intermediate in the biosynthesis of sterigmatocystin and is converted into averantin (AVN) by the ketoreductase stcE which reduces the hexanoate ketone to an alcohol. Averantin is then oxidized into 5'-hydroxyaverantin (HAVN) by the cytochrome P450 monooxygenase stcF. 5'-hydroxyaverantin is further converted to 5'-oxyaverantin (OAVN) by the 5'-hydroxyaverantin dehydrogenase stcG. The next step is the conversion of OAVN into averufin (AVF) which is catalyzed by a yet to be identified enzyme. The cytochrome P450 monooxygenase stcB and the flavin-binding monooxygenase stcW are both required for the conversion of averufin to 1-hydroxyversicolorone. The esterase stcI probably catalyzes the formation of versiconal hemiacetal acetate from 1-hydroxyversicolorone. The oxydoreductase stcN then probably catalyzes the biosynthetic step from versiconal to versicolorin B (VERB). The next step is performed by the versicolorin B desaturase stcL to produce versicolorin A (VERA). The ketoreductase stcU and the cytochrome P450 monooxygenase stcS are involved in the conversion of versicolorin A to demethylsterigmatocystin. The Baeyer-Villiger oxidas stcQ and the reductase stcR might be involved in the biosynthetic step from versicolorin A to demethylsterigmatocystin. The final step in the biosynthesis of sterigmatocystin is the methylation of demethylsterigmatocystin catalyzed by the methyltransferase stcP. This Emericella nidulans (strain FGSC A4 / ATCC 38163 / CBS 112.46 / NRRL 194 / M139) (Aspergillus nidulans) protein is Oxidoreductase stcQ.